The following is a 126-amino-acid chain: Prefoldin subunit beta (126 aa).

The protein belongs to the prefoldin subunit beta family. Heterohexamer of two alpha and four beta subunits.

It localises to the cytoplasm. In terms of biological role, molecular chaperone capable of stabilizing a range of proteins. Seems to fulfill an ATP-independent, HSP70-like function in archaeal de novo protein folding. The sequence is that of Prefoldin subunit beta from Methanocella arvoryzae (strain DSM 22066 / NBRC 105507 / MRE50).